Reading from the N-terminus, the 1136-residue chain is Receptor-type guanylate cyclase gcy-4 (1136 aa).

The first 21 residues, 1 to 21, serve as a signal peptide directing secretion; that stretch reads MRQLNYYIFISTILTYNLTHG. Residues 22-485 lie on the Extracellular side of the membrane; sequence QGPRPVIRVG…CPLPIFEQYR (464 aa). Residues Asn40, Asn194, Asn252, Asn351, Asn377, Asn386, and Asn438 are each glycosylated (N-linked (GlcNAc...) asparagine). Residues 486 to 506 traverse the membrane as a helical segment; the sequence is ALVIVAIAVTILILLAIIICM. The Cytoplasmic portion of the chain corresponds to 507 to 1136; sequence SSKIRNRRVE…LRREMMRVEV (630 aa). The region spanning 533-833 is the Protein kinase domain; the sequence is LPMHRRASKS…EDNLMDHVFS (301 aa). The disordered stretch occupies residues 536-565; that stretch reads HRRASKSSQESETESASETENFTSKSGDTM. The Guanylate cyclase domain occupies 891 to 1021; that stretch reads TVFFSDLVKF…DTVNTASRME (131 aa).

It belongs to the adenylyl cyclase class-4/guanylyl cyclase family. In terms of tissue distribution, expression is biased toward ASE right (ASER) sensory neuron.

The protein resides in the cell membrane. The catalysed reaction is GTP = 3',5'-cyclic GMP + diphosphate. Its function is as follows. Guanylate cyclase involved in the production of the second messenger cGMP. Regulates chemotaxis responses toward Br(1-) and I(1-) salt ions in ASE right (ASER) sensory neuron. This Caenorhabditis elegans protein is Receptor-type guanylate cyclase gcy-4.